The following is a 221-amino-acid chain: GTP-binding nuclear protein Ran-2 (221 aa).

The Small GTPase Ran-type domain occupies 10–174; that stretch reads DYPSFKLVIV…LYLARKLAGD (165 aa). Residue 21 to 28 participates in GTP binding; the sequence is DGGTGKTT. The switch-I stretch occupies residues 40–48; that stretch reads KKYEPTIGV. Residues G71, 125–128, and 153–155 each bind GTP; these read NKVD and SAK. The tract at residues 71–87 is switch-II; sequence GQEKFGGLRDGYYIHGQ. Residues 202 to 212 show a composition bias toward low complexity; the sequence is ADLAAAAAQPL. Residues 202-221 form a disordered region; that stretch reads ADLAAAAAQPLPDDDDDAFE.

Belongs to the small GTPase superfamily. Ran family. In terms of assembly, found in a nuclear export complex with RanGTP, exportin and pre-miRNA. Interacts with RanBP1a and RanBP1b. Interacts with PHRIP1. Interacts with KPNB1. Binds to PHIP1.

The protein localises to the nucleus. Its subcellular location is the nucleus envelope. GTP-binding protein involved in nucleocytoplasmic transport. Required for the import of protein into the nucleus and also for RNA export. Involved in chromatin condensation and control of cell cycle. The sequence is that of GTP-binding nuclear protein Ran-2 from Arabidopsis thaliana (Mouse-ear cress).